The following is an 84-amino-acid chain: ATP synthase subunit c (84 aa).

2 consecutive transmembrane segments (helical) span residues 9–29 (IIGA…GFAI) and 54–74 (IVAG…LLFI).

The protein belongs to the ATPase C chain family. F-type ATPases have 2 components, F(1) - the catalytic core - and F(0) - the membrane proton channel. F(1) has five subunits: alpha(3), beta(3), gamma(1), delta(1), epsilon(1). F(0) has three main subunits: a(1), b(2) and c(10-14). The alpha and beta chains form an alternating ring which encloses part of the gamma chain. F(1) is attached to F(0) by a central stalk formed by the gamma and epsilon chains, while a peripheral stalk is formed by the delta and b chains.

The protein localises to the cell inner membrane. Functionally, f(1)F(0) ATP synthase produces ATP from ADP in the presence of a proton or sodium gradient. F-type ATPases consist of two structural domains, F(1) containing the extramembraneous catalytic core and F(0) containing the membrane proton channel, linked together by a central stalk and a peripheral stalk. During catalysis, ATP synthesis in the catalytic domain of F(1) is coupled via a rotary mechanism of the central stalk subunits to proton translocation. Its function is as follows. Key component of the F(0) channel; it plays a direct role in translocation across the membrane. A homomeric c-ring of between 10-14 subunits forms the central stalk rotor element with the F(1) delta and epsilon subunits. This is ATP synthase subunit c from Haemophilus influenzae (strain PittEE).